The chain runs to 120 residues: Large ribosomal subunit protein uL18 (120 aa).

This sequence belongs to the universal ribosomal protein uL18 family. Part of the 50S ribosomal subunit; part of the 5S rRNA/L5/L18/L25 subcomplex. Contacts the 5S and 23S rRNAs.

Its function is as follows. This is one of the proteins that bind and probably mediate the attachment of the 5S RNA into the large ribosomal subunit, where it forms part of the central protuberance. In Rhizobium etli (strain CIAT 652), this protein is Large ribosomal subunit protein uL18.